A 318-amino-acid chain; its full sequence is NADH-ubiquinone oxidoreductase chain 1 (318 aa).

A run of 8 helical transmembrane segments spans residues 2–22 (FMIN…FLTL), 70–90 (MFII…IPLP), 100–120 (LGIL…LWSG), 147–167 (AIIL…TLII), 171–191 (YLWL…STLA), 217–237 (AGPF…MNIF), 253–273 (ELYS…FLWI), and 294–314 (LPLT…LSSI).

Belongs to the complex I subunit 1 family. As to quaternary structure, core subunit of respiratory chain NADH dehydrogenase (Complex I) which is composed of 45 different subunits.

It is found in the mitochondrion inner membrane. The enzyme catalyses a ubiquinone + NADH + 5 H(+)(in) = a ubiquinol + NAD(+) + 4 H(+)(out). Functionally, core subunit of the mitochondrial membrane respiratory chain NADH dehydrogenase (Complex I) which catalyzes electron transfer from NADH through the respiratory chain, using ubiquinone as an electron acceptor. Essential for the catalytic activity and assembly of complex I. The polypeptide is NADH-ubiquinone oxidoreductase chain 1 (MT-ND1) (Equus caballus (Horse)).